A 477-amino-acid polypeptide reads, in one-letter code: Cytochrome b mRNA maturase bI3 (477 aa).

A cytochrome b region spans residues 1 to 163 (MRLLKSHPLL…IPWIGQDIVE (163 aa)). Helical transmembrane passes span 32–52 (FGSLLACCLIIQIVTGVTLAM), 86–106 (ASAFFFLVYLHIGRGMYYGSY), 113–133 (VWAIGTVILILMMATAFLGYV), 142–162 (WGATVITNLISAIPWIGQDIV), and 166–186 (IITLIINLSFIAILFSIVVVY). Residues 164 to 477 (SKIITLIINL…YSTLNYPDAK (314 aa)) form a maturase region.

It in the N-terminal section; belongs to the cytochrome b family. The protein in the C-terminal section; belongs to the LAGLIDADG endonuclease family.

The protein resides in the mitochondrion inner membrane. Functionally, mitochondrial mRNA maturase required for splicing of intron 3 of the cytochrome b (cob) gene, containing its own coding sequence. This Neurospora crassa (strain ATCC 24698 / 74-OR23-1A / CBS 708.71 / DSM 1257 / FGSC 987) protein is Cytochrome b mRNA maturase bI3 (bI3).